The chain runs to 549 residues: Eukaryotic translation initiation factor 4B2 (549 aa).

Disordered stretches follow at residues 1–446 (MSKP…DLIR) and 465–549 (FRPR…REGW). The span at 24–46 (AEATATAADSQSFPSLKEAATAK) shows a compositional bias: low complexity. 2 stretches are compositionally biased toward gly residues: residues 96–109 (RLGG…GGRS) and 126–136 (SWGGGGGGRRS). The short motif at 169-176 (GKKSLPSF) is the Nuclear localization signal 1 element. Positions 184 to 218 (RYGGGGGSFGGGGGGGAGSYGGGGAGAGSGGGGGF) are enriched in gly residues. The Nuclear localization signal 2 motif lies at 234 to 241 (SSTFGSGF). A compositionally biased stretch (basic and acidic residues) spans 263 to 278 (QEERRRLVFEPRKADT). The segment covering 281–292 (SETPTAVKTSKP) has biased composition (polar residues). Basic and acidic residues predominate over residues 299 to 323 (RPREQVLAEKGLDWKKLDSDIEAKK). The span at 327–349 (SRPSSAQSSRPSSAQSNRSESSA) shows a compositional bias: low complexity. 3 stretches are compositionally biased toward basic and acidic residues: residues 369–431 (AKPR…KESQ), 485–507 (ERPH…ERPR), and 518–549 (PVDD…REGW).

Belongs to the eIF-4 subunit B family. As to quaternary structure, homodimer. Nonspherical monomer. mRNA-discriminating component of initiation complexes. Post-translationally, phosphorylated.

The protein localises to the nucleus. Functionally, promotes the eIF4F and eIF4A RNA-dependent ATP-hydrolysis activity with different efficiency depending on mRNAs, thus providing mRNA discrimination during initiation of translation. This chain is Eukaryotic translation initiation factor 4B2, found in Arabidopsis thaliana (Mouse-ear cress).